A 302-amino-acid chain; its full sequence is uncharacterized protein (302 aa).

Residues 1 to 60 (MRMNMSDFATFFAVARNQSFRAAGDELGLSSSAISHSIKTLEQRLKIRLFNRTTRSVSLT) form the HTH lysR-type domain. The segment at residues 20–40 (FRAAGDELGLSSSAISHSIKT) is a DNA-binding region (H-T-H motif).

This sequence belongs to the LysR transcriptional regulatory family.

This is an uncharacterized protein from Escherichia coli (strain K12).